The primary structure comprises 588 residues: Juvenile hormone esterase (588 aa).

Positions 1–23 (MKFPKNLFLVLFYTSWKFCDVCA) are cleaved as a signal peptide. Asn-79 and Asn-83 each carry an N-linked (GlcNAc...) asparagine glycan. Cys-91 and Cys-109 are oxidised to a cystine. Residue Ser-214 is the Acyl-ester intermediate of the active site. Residue Asn-257 is glycosylated (N-linked (GlcNAc...) asparagine). Residues Cys-268 and Cys-281 are joined by a disulfide bond. Glu-350 acts as the Charge relay system in catalysis. N-linked (GlcNAc...) asparagine glycans are attached at residues Asn-389, Asn-396, and Asn-472. Residue His-479 is the Charge relay system of the active site.

This sequence belongs to the type-B carboxylesterase/lipase family.

The protein localises to the secreted. The catalysed reaction is juvenile hormone III + H2O = juvenile hormone III carboxylate + methanol + H(+). With respect to regulation, inhibited by 3-octylthio-1,1,1-trifluoro-2-propanone (OTFP), a specific inhibitor of juvenile hormone esterase (JHE), but not by diisopropyl fluorophosphate (DFP), a serine enzyme inhibitor. In terms of biological role, may function as a juvenile hormone (JH)-specific degradation enzyme in vivo decreasing JH activity. Hydrolyzes JH III in vitro. Hydrolyzes effectively also methyl hepthylthioacetothioate (HEPTAT), a synthetic substrate. Of the general esterase substrates, it has preference for 2-naphthyl acetate (2-NA) and shows a weak activity for 1-NA and 4-nitrophenylacetate (4-NPA). This is Juvenile hormone esterase from Tribolium castaneum (Red flour beetle).